Here is a 248-residue protein sequence, read N- to C-terminus: 2,3-bisphosphoglycerate-dependent phosphoglycerate mutase (248 aa).

Residues 8–15 (RHGESEWN), 21–22 (TG), arginine 60, 87–90 (ERHY), lysine 98, 114–115 (RR), and 183–184 (GN) each bind substrate. The Tele-phosphohistidine intermediate role is filled by histidine 9. The active-site Proton donor/acceptor is the glutamate 87.

Belongs to the phosphoglycerate mutase family. BPG-dependent PGAM subfamily.

It catalyses the reaction (2R)-2-phosphoglycerate = (2R)-3-phosphoglycerate. Its pathway is carbohydrate degradation; glycolysis; pyruvate from D-glyceraldehyde 3-phosphate: step 3/5. In terms of biological role, catalyzes the interconversion of 2-phosphoglycerate and 3-phosphoglycerate. This is 2,3-bisphosphoglycerate-dependent phosphoglycerate mutase from Borrelia garinii subsp. bavariensis (strain ATCC BAA-2496 / DSM 23469 / PBi) (Borreliella bavariensis).